The sequence spans 330 residues: DNA-directed RNA polymerase subunit alpha (330 aa).

Positions 1–236 (MQGSVTEFLK…EQLDAFVDLR (236 aa)) are alpha N-terminal domain (alpha-NTD). The tract at residues 250-330 (FDPILLRPVD…NWPPASIAED (81 aa)) is alpha C-terminal domain (alpha-CTD).

The protein belongs to the RNA polymerase alpha chain family. As to quaternary structure, homodimer. The RNAP catalytic core consists of 2 alpha, 1 beta, 1 beta' and 1 omega subunit. When a sigma factor is associated with the core the holoenzyme is formed, which can initiate transcription.

The catalysed reaction is RNA(n) + a ribonucleoside 5'-triphosphate = RNA(n+1) + diphosphate. Its function is as follows. DNA-dependent RNA polymerase catalyzes the transcription of DNA into RNA using the four ribonucleoside triphosphates as substrates. In Vibrio campbellii (strain ATCC BAA-1116), this protein is DNA-directed RNA polymerase subunit alpha.